A 248-amino-acid polypeptide reads, in one-letter code: Non-specific acid phosphatase (248 aa).

The first 20 residues, 1 to 20 (MKKLLAVFCAGAFVSTSVFA), serve as a signal peptide directing secretion.

This sequence belongs to the class A bacterial acid phosphatase family.

It localises to the periplasm. It catalyses the reaction a phosphate monoester + H2O = an alcohol + phosphate. The chain is Non-specific acid phosphatase (phoN) from Providencia stuartii.